Here is a 31-residue protein sequence, read N- to C-terminus: Photosystem II reaction center protein T (31 aa).

The chain crosses the membrane as a helical span at residues 3–23 (ALVYTFLLIGTLGIIFFAIFF).

Belongs to the PsbT family. In terms of assembly, PSII is composed of 1 copy each of membrane proteins PsbA, PsbB, PsbC, PsbD, PsbE, PsbF, PsbH, PsbI, PsbJ, PsbK, PsbL, PsbM, PsbT, PsbY, PsbZ, Psb30/Ycf12, at least 3 peripheral proteins of the oxygen-evolving complex and a large number of cofactors. It forms dimeric complexes.

Its subcellular location is the plastid. It is found in the chloroplast thylakoid membrane. Found at the monomer-monomer interface of the photosystem II (PS II) dimer, plays a role in assembly and dimerization of PSII. PSII is a light-driven water plastoquinone oxidoreductase, using light energy to abstract electrons from H(2)O, generating a proton gradient subsequently used for ATP formation. This is Photosystem II reaction center protein T from Tetradesmus obliquus (Green alga).